A 420-amino-acid polypeptide reads, in one-letter code: Serine hydroxymethyltransferase (420 aa).

(6S)-5,6,7,8-tetrahydrofolate is bound by residues leucine 123 and 127 to 129 (GHL). Lysine 232 carries the post-translational modification N6-(pyridoxal phosphate)lysine. Residue 357 to 359 (SPF) participates in (6S)-5,6,7,8-tetrahydrofolate binding.

It belongs to the SHMT family. As to quaternary structure, homodimer. It depends on pyridoxal 5'-phosphate as a cofactor.

It is found in the cytoplasm. The enzyme catalyses (6R)-5,10-methylene-5,6,7,8-tetrahydrofolate + glycine + H2O = (6S)-5,6,7,8-tetrahydrofolate + L-serine. It participates in one-carbon metabolism; tetrahydrofolate interconversion. It functions in the pathway amino-acid biosynthesis; glycine biosynthesis; glycine from L-serine: step 1/1. Its function is as follows. Catalyzes the reversible interconversion of serine and glycine with tetrahydrofolate (THF) serving as the one-carbon carrier. This reaction serves as the major source of one-carbon groups required for the biosynthesis of purines, thymidylate, methionine, and other important biomolecules. Also exhibits THF-independent aldolase activity toward beta-hydroxyamino acids, producing glycine and aldehydes, via a retro-aldol mechanism. The chain is Serine hydroxymethyltransferase from Streptococcus pyogenes serotype M4 (strain MGAS10750).